Here is a 395-residue protein sequence, read N- to C-terminus: Cuticlin-5 (395 aa).

An N-terminal signal peptide occupies residues 1–18 (MNFILAVFAIILLQAVRG). The Extracellular segment spans residues 19–358 (EIDNAIVGDP…ELCMTAIGTT (340 aa)). A ZP domain is found at 46-291 (SCVGNFIIKV…DYCDVPSCPD (246 aa)). Residues asparagine 90 and asparagine 307 are each glycosylated (N-linked (GlcNAc...) asparagine). A helical membrane pass occupies residues 359–379 (LLVFLNAFLFIISLVSIVHVC). The Cytoplasmic portion of the chain corresponds to 380-395 (CFRTSPKLEKTKSTML).

The protein resides in the cell membrane. In terms of biological role, plays a role in alae formation in L1 and dauer stage larvae. The chain is Cuticlin-5 from Caenorhabditis elegans.